The chain runs to 196 residues: Heat shock protein beta-8 (196 aa).

The segment at 1 to 28 (MADGQLPFPCSYPSRLRRDPFRDSPLSS) is disordered. Phosphoserine occurs at positions 24 and 57. Threonine 63 is subject to Phosphothreonine. 2 positions are modified to asymmetric dimethylarginine: arginine 71 and arginine 78. The region spanning 74-185 (TATARFGVPA…PFGESSFNNE (112 aa)) is the sHSP domain. The interval 176-196 (PFGESSFNNELPQDNQEVTCS) is disordered. Polar residues predominate over residues 178–196 (GESSFNNELPQDNQEVTCS).

It belongs to the small heat shock protein (HSP20) family. As to quaternary structure, monomer. Forms a ternary complex with BAG3 and HSPA1A. Component of the chaperone-assisted selective autophagy (CASA) complex consisting of BAG3, HSPA8/HSC70, HSPB8 and STUB1/CHIP. Interacts with HSPB1. Interacts with DNAJB6. Interacts with BAG3. Post-translationally, phosphorylated.

It localises to the cytoplasm. Its subcellular location is the nucleus. Functionally, involved in the chaperone-assisted selective autophagy (CASA), a crucial process for protein quality control, particularly in mechanical strained cells and tissues such as muscle. Displays temperature-dependent chaperone activity. This is Heat shock protein beta-8 (Hspb8) from Rattus norvegicus (Rat).